The primary structure comprises 131 residues: Global transcriptional regulator Spx (131 aa).

C10 and C13 are joined by a disulfide.

It belongs to the ArsC family. Spx subfamily. In terms of assembly, interacts with the C-terminal domain of the alpha subunit of the RNAP.

The protein resides in the cytoplasm. Under non-stress conditions, Spx is degraded by ClpXP. Efficient degradation by ClpXP requires the adapter protein SpxH/YjbH. Function, levels and solubility of Spx are affected by SpxH/YjbH aggregation and stress conditions. Global transcriptional regulator that plays a key role in stress response and exerts either positive or negative regulation of genes. Acts by interacting with the C-terminal domain of the alpha subunit of the RNA polymerase (RNAP). This interaction can enhance binding of RNAP to the promoter region of target genes and stimulate their transcription, or block interaction of RNAP with activator proteins and repress transcription. Its function is as follows. Required for transcription of thioredoxin reductase (trxB). Modulates the expression of icaR, encoding a repressor of the biofilm operon icaADBC. Also controls the transcription of trfA, a gene implicated in cell wall antibiotic resistance, which in turn is required for degradation of MazE antitoxin, the unstable component of the MazEF toxin-antitoxin system, that neutralizes the endoribonuclease activity of MazF toxin. This is Global transcriptional regulator Spx from Staphylococcus aureus (strain NCTC 8325 / PS 47).